The sequence spans 1158 residues: Putative HERC2-like protein 3 (1158 aa).

The interval 281-302 (PRKKRVPKKPESTDDEEKIGNE) is disordered. Residues 293–302 (TDDEEKIGNE) are compositionally biased toward acidic residues. In terms of domain architecture, MIB/HERC2 spans 587-660 (SGPELAAMMK…NYDLKLAELP (74 aa)). Residues 662-684 (PAQPSAEDSDTEDDSEAEQTERN) are disordered. Residues 668–679 (EDSDTEDDSEAE) are compositionally biased toward acidic residues.

The polypeptide is Putative HERC2-like protein 3 (HERC2P3) (Homo sapiens (Human)).